Here is a 98-residue protein sequence, read N- to C-terminus: MSADPRHYDVIVSPVITEKATNLTEQNKVVFRVAPKATKPQIKDAVEKLFDVKVTGVNTLTTKGKKKFFRGQRGQRSDVKKAIVTLAEGDTIDVTTGL.

It belongs to the universal ribosomal protein uL23 family. As to quaternary structure, part of the 50S ribosomal subunit. Contacts protein L29, and trigger factor when it is bound to the ribosome.

In terms of biological role, one of the early assembly proteins it binds 23S rRNA. One of the proteins that surrounds the polypeptide exit tunnel on the outside of the ribosome. Forms the main docking site for trigger factor binding to the ribosome. This Methylorubrum populi (strain ATCC BAA-705 / NCIMB 13946 / BJ001) (Methylobacterium populi) protein is Large ribosomal subunit protein uL23.